Consider the following 463-residue polypeptide: ATP-dependent protease ATPase subunit HslU (463 aa).

Residues valine 21, glycine 63 to glutamate 68, aspartate 276, glutamate 341, and arginine 413 contribute to the ATP site.

The protein belongs to the ClpX chaperone family. HslU subfamily. A double ring-shaped homohexamer of HslV is capped on each side by a ring-shaped HslU homohexamer. The assembly of the HslU/HslV complex is dependent on binding of ATP.

The protein localises to the cytoplasm. Its function is as follows. ATPase subunit of a proteasome-like degradation complex; this subunit has chaperone activity. The binding of ATP and its subsequent hydrolysis by HslU are essential for unfolding of protein substrates subsequently hydrolyzed by HslV. HslU recognizes the N-terminal part of its protein substrates and unfolds these before they are guided to HslV for hydrolysis. This is ATP-dependent protease ATPase subunit HslU from Thermotoga neapolitana (strain ATCC 49049 / DSM 4359 / NBRC 107923 / NS-E).